A 524-amino-acid chain; its full sequence is 2-isopropylmalate synthase (524 aa).

The 263-residue stretch at 5–267 (VIIFDTTLRD…HTNINHQEIF (263 aa)) folds into the Pyruvate carboxyltransferase domain. 4 residues coordinate Mn(2+): aspartate 14, histidine 202, histidine 204, and asparagine 238. The tract at residues 392–524 (SLDYFSVQSG…SKHQNNQETV (133 aa)) is regulatory domain.

It belongs to the alpha-IPM synthase/homocitrate synthase family. LeuA type 1 subfamily. Homodimer. The cofactor is Mn(2+).

It localises to the cytoplasm. The catalysed reaction is 3-methyl-2-oxobutanoate + acetyl-CoA + H2O = (2S)-2-isopropylmalate + CoA + H(+). Its pathway is amino-acid biosynthesis; L-leucine biosynthesis; L-leucine from 3-methyl-2-oxobutanoate: step 1/4. Its function is as follows. Catalyzes the condensation of the acetyl group of acetyl-CoA with 3-methyl-2-oxobutanoate (2-ketoisovalerate) to form 3-carboxy-3-hydroxy-4-methylpentanoate (2-isopropylmalate). This is 2-isopropylmalate synthase from Serratia proteamaculans (strain 568).